The chain runs to 159 residues: Phosphopantetheine adenylyltransferase (159 aa).

T10 contacts substrate. Residues 10 to 11 (TF) and H18 each bind ATP. Residues K42, L74, and R88 each coordinate substrate. Residues 89 to 91 (GLR), E99, and 124 to 130 (YSFISSS) contribute to the ATP site.

Belongs to the bacterial CoaD family. In terms of assembly, homohexamer. Mg(2+) is required as a cofactor.

The protein localises to the cytoplasm. The enzyme catalyses (R)-4'-phosphopantetheine + ATP + H(+) = 3'-dephospho-CoA + diphosphate. It participates in cofactor biosynthesis; coenzyme A biosynthesis; CoA from (R)-pantothenate: step 4/5. Its function is as follows. Reversibly transfers an adenylyl group from ATP to 4'-phosphopantetheine, yielding dephospho-CoA (dPCoA) and pyrophosphate. The sequence is that of Phosphopantetheine adenylyltransferase from Campylobacter hominis (strain ATCC BAA-381 / DSM 21671 / CCUG 45161 / LMG 19568 / NCTC 13146 / CH001A).